The primary structure comprises 400 residues: Capsid protein (400 aa).

Residues 1–10 (MDPNLDQDTL) are compositionally biased toward polar residues. The disordered stretch occupies residues 1–54 (MDPNLDQDTLPTHEEIDNDVDSAEEEPPEPPLLPDDIDDDDSHGSRTRRQVKPP). Positions 16 to 28 (IDNDVDSAEEEPP) are enriched in acidic residues.

The protein belongs to the potexvirus capsid protein family.

The protein resides in the virion. Functionally, required for genome encapsidation. This Botryotinia fuckeliana (Noble rot fungus) protein is Capsid protein (ORF3).